A 546-amino-acid chain; its full sequence is Phosphomethylpyrimidine synthase (546 aa).

Substrate contacts are provided by residues asparagine 145, methionine 174, tyrosine 203, histidine 239, 259 to 261, 300 to 303, and glutamate 339; these read SRG and DGLR. Residue histidine 343 participates in Zn(2+) binding. Tyrosine 366 contributes to the substrate binding site. Residue histidine 407 participates in Zn(2+) binding. 3 residues coordinate [4Fe-4S] cluster: cysteine 487, cysteine 490, and cysteine 495.

Belongs to the ThiC family. It depends on [4Fe-4S] cluster as a cofactor.

The catalysed reaction is 5-amino-1-(5-phospho-beta-D-ribosyl)imidazole + S-adenosyl-L-methionine = 4-amino-2-methyl-5-(phosphooxymethyl)pyrimidine + CO + 5'-deoxyadenosine + formate + L-methionine + 3 H(+). The protein operates within cofactor biosynthesis; thiamine diphosphate biosynthesis. Catalyzes the synthesis of the hydroxymethylpyrimidine phosphate (HMP-P) moiety of thiamine from aminoimidazole ribotide (AIR) in a radical S-adenosyl-L-methionine (SAM)-dependent reaction. This chain is Phosphomethylpyrimidine synthase, found in Mycobacterium marinum (strain ATCC BAA-535 / M).